A 133-amino-acid chain; its full sequence is Holo-[acyl-carrier-protein] synthase (133 aa).

Mg(2+)-binding residues include aspartate 8 and glutamate 56.

It belongs to the P-Pant transferase superfamily. AcpS family. The cofactor is Mg(2+).

Its subcellular location is the cytoplasm. The enzyme catalyses apo-[ACP] + CoA = holo-[ACP] + adenosine 3',5'-bisphosphate + H(+). Its function is as follows. Transfers the 4'-phosphopantetheine moiety from coenzyme A to a Ser of acyl-carrier-protein. This is Holo-[acyl-carrier-protein] synthase from Clostridium perfringens (strain 13 / Type A).